Here is a 212-residue protein sequence, read N- to C-terminus: Adenylate kinase (212 aa).

Residue 10–15 (GAGKGT) coordinates ATP. Residues 30 to 59 (ALGDIFRTIIKTSTSEAELINNYVKQGELV) form an NMP region. Residues Arg36, 57–59 (ELV), 85–88 (GYPR), and Gln92 contribute to the AMP site. The interval 122–160 (GRYSCKNCRKIYNSYFLQPKTDNVCDVCGSSTFDYRKDD) is LID. Arg123 lines the ATP pocket. Cys126 and Cys129 together coordinate Zn(2+). 132 to 133 (IY) contacts ATP. Zn(2+) is bound by residues Cys146 and Cys149. 2 residues coordinate AMP: Arg157 and Arg168. Residue Lys196 participates in ATP binding.

This sequence belongs to the adenylate kinase family. As to quaternary structure, monomer.

The protein localises to the cytoplasm. The enzyme catalyses AMP + ATP = 2 ADP. It functions in the pathway purine metabolism; AMP biosynthesis via salvage pathway; AMP from ADP: step 1/1. Functionally, catalyzes the reversible transfer of the terminal phosphate group between ATP and AMP. Plays an important role in cellular energy homeostasis and in adenine nucleotide metabolism. This chain is Adenylate kinase, found in Rickettsia akari (strain Hartford).